A 203-amino-acid chain; its full sequence is Large ribosomal subunit protein bL25 (203 aa).

It belongs to the bacterial ribosomal protein bL25 family. CTC subfamily. Part of the 50S ribosomal subunit; part of the 5S rRNA/L5/L18/L25 subcomplex. Contacts the 5S rRNA. Binds to the 5S rRNA independently of L5 and L18.

This is one of the proteins that binds to the 5S RNA in the ribosome where it forms part of the central protuberance. This is Large ribosomal subunit protein bL25 from Cereibacter sphaeroides (strain ATCC 17029 / ATH 2.4.9) (Rhodobacter sphaeroides).